Reading from the N-terminus, the 452-residue chain is Bifunctional protein GlmU (452 aa).

The interval 1–226 is pyrophosphorylase; the sequence is MSLSVVILAA…ATEVEGVNTR (226 aa). UDP-N-acetyl-alpha-D-glucosamine-binding positions include 8–11, lysine 22, glutamine 73, 78–79, 100–102, glycine 137, glutamate 151, asparagine 166, and asparagine 224; these read LAAG, GT, and YGD. Aspartate 102 lines the Mg(2+) pocket. Residue asparagine 224 participates in Mg(2+) binding. The linker stretch occupies residues 227–247; sequence LQLANLERAYQLKKATELLLS. Positions 248–452 are N-acetyltransferase; the sequence is GVMLRDPNRF…INNWKRPTKK (205 aa). UDP-N-acetyl-alpha-D-glucosamine is bound by residues arginine 330 and lysine 348. Histidine 360 acts as the Proton acceptor in catalysis. UDP-N-acetyl-alpha-D-glucosamine contacts are provided by tyrosine 363 and asparagine 374. Acetyl-CoA is bound by residues alanine 377, 383–384, serine 402, alanine 420, and arginine 437; that span reads NY.

The protein in the N-terminal section; belongs to the N-acetylglucosamine-1-phosphate uridyltransferase family. It in the C-terminal section; belongs to the transferase hexapeptide repeat family. Homotrimer. Mg(2+) is required as a cofactor.

It is found in the cytoplasm. It catalyses the reaction alpha-D-glucosamine 1-phosphate + acetyl-CoA = N-acetyl-alpha-D-glucosamine 1-phosphate + CoA + H(+). The enzyme catalyses N-acetyl-alpha-D-glucosamine 1-phosphate + UTP + H(+) = UDP-N-acetyl-alpha-D-glucosamine + diphosphate. It functions in the pathway nucleotide-sugar biosynthesis; UDP-N-acetyl-alpha-D-glucosamine biosynthesis; N-acetyl-alpha-D-glucosamine 1-phosphate from alpha-D-glucosamine 6-phosphate (route II): step 2/2. The protein operates within nucleotide-sugar biosynthesis; UDP-N-acetyl-alpha-D-glucosamine biosynthesis; UDP-N-acetyl-alpha-D-glucosamine from N-acetyl-alpha-D-glucosamine 1-phosphate: step 1/1. It participates in bacterial outer membrane biogenesis; LPS lipid A biosynthesis. In terms of biological role, catalyzes the last two sequential reactions in the de novo biosynthetic pathway for UDP-N-acetylglucosamine (UDP-GlcNAc). The C-terminal domain catalyzes the transfer of acetyl group from acetyl coenzyme A to glucosamine-1-phosphate (GlcN-1-P) to produce N-acetylglucosamine-1-phosphate (GlcNAc-1-P), which is converted into UDP-GlcNAc by the transfer of uridine 5-monophosphate (from uridine 5-triphosphate), a reaction catalyzed by the N-terminal domain. The polypeptide is Bifunctional protein GlmU (Psychromonas ingrahamii (strain DSM 17664 / CCUG 51855 / 37)).